A 432-amino-acid chain; its full sequence is Serine hydroxymethyltransferase 1 (432 aa).

Residues leucine 131 and 135–137 (GHL) each bind (6S)-5,6,7,8-tetrahydrofolate. At lysine 240 the chain carries N6-(pyridoxal phosphate)lysine.

The protein belongs to the SHMT family. Homodimer. The cofactor is pyridoxal 5'-phosphate.

It localises to the cytoplasm. It carries out the reaction (6R)-5,10-methylene-5,6,7,8-tetrahydrofolate + glycine + H2O = (6S)-5,6,7,8-tetrahydrofolate + L-serine. The protein operates within one-carbon metabolism; tetrahydrofolate interconversion. It participates in amino-acid biosynthesis; glycine biosynthesis; glycine from L-serine: step 1/1. Functionally, catalyzes the reversible interconversion of serine and glycine with tetrahydrofolate (THF) serving as the one-carbon carrier. This reaction serves as the major source of one-carbon groups required for the biosynthesis of purines, thymidylate, methionine, and other important biomolecules. Also exhibits THF-independent aldolase activity toward beta-hydroxyamino acids, producing glycine and aldehydes, via a retro-aldol mechanism. This is Serine hydroxymethyltransferase 1 from Rhodopseudomonas palustris (strain ATCC BAA-98 / CGA009).